The primary structure comprises 317 residues: Ribosomal protein L11 methyltransferase (317 aa).

S-adenosyl-L-methionine-binding residues include Thr158, Gly179, Asp201, and Asn244.

It belongs to the methyltransferase superfamily. PrmA family.

It is found in the cytoplasm. It carries out the reaction L-lysyl-[protein] + 3 S-adenosyl-L-methionine = N(6),N(6),N(6)-trimethyl-L-lysyl-[protein] + 3 S-adenosyl-L-homocysteine + 3 H(+). Its function is as follows. Methylates ribosomal protein L11. The sequence is that of Ribosomal protein L11 methyltransferase from Streptococcus pyogenes serotype M3 (strain ATCC BAA-595 / MGAS315).